A 482-amino-acid chain; its full sequence is MSPTTPADQAKKLIKVPEMRRIKHIYFVGIGGAGMCGIAEVLKNQGYKVSGSDIKASKTTAHLEQKGIKVYIGHTADNLKAVDVLVVSTAIDPENPEVKAAIENRIPVVRRAEMLGELMRYRHGIAVAGTHGKTTTTSLLTTMLAEENMDPTYVIGGLLNRTGVNAALGASRFIVAEADESDASFLYLQPMAAIITNVDADHMDTYGGSFDKLKDTFVEFIHRLPFYGLAVVCGDDHNVREIMPRFGRPTLTYGFNEDNDIRAVDVVQEGMQSHFTVLRKDREPLRLTVNQPGLHNILNALAAIGVATDEGVSDAAIARALEGFSGVGRRFQVQGEFELGEGSVKLVDDYGHHPKEVEATIKAARQSHPDRRLVMMFQPHRFSRTRDCFDDFVEVLSQVDQLLLLEVYPAGEKPIVGADSRTLARSIRLRGDVEPILVDPVEGNLPNIIQKVLQPNDLLLTQGAGNVGAISVDLAQQQLYLK.

Gly129 to Thr135 lines the ATP pocket.

This sequence belongs to the MurCDEF family.

The protein resides in the cytoplasm. It carries out the reaction UDP-N-acetyl-alpha-D-muramate + L-alanine + ATP = UDP-N-acetyl-alpha-D-muramoyl-L-alanine + ADP + phosphate + H(+). The protein operates within cell wall biogenesis; peptidoglycan biosynthesis. Its function is as follows. Cell wall formation. The protein is UDP-N-acetylmuramate--L-alanine ligase of Acinetobacter baylyi (strain ATCC 33305 / BD413 / ADP1).